Consider the following 361-residue polypeptide: Solute carrier family 25 member 3 (361 aa).

Residues 1–49 constitute a mitochondrion transit peptide; that stretch reads MFSSVAHLARANPFNTPHLQLVHDGLGDFRSRPPGPTGQPRRPRNLAAA. A disordered region spans residues 25–44; that stretch reads GLGDFRSRPPGPTGQPRRPR. Residues 50-62 lie on the Mitochondrial intermembrane side of the membrane; the sequence is AVEEYSCEFGSAK. 3 Solcar repeats span residues 62-146, 159-243, and 260-338; these read KYYA…FKVL, WRTS…TVEA, and EQLV…VKVY. A helical membrane pass occupies residues 63–85; sequence YYALCGFGGVLSCGLTHTAVVPL. Residues 86–120 lie on the Mitochondrial matrix side of the membrane; the sequence is DLVKCRMQVDPQKYKGIFNGFSVTLKEDGVRGLAK. The residue at position 98 (Lys98) is an N6-acetyllysine. Lys111 carries the N6-methyllysine modification. Residues 121-140 form a helical membrane-spanning segment; the sequence is GWAPTFLGYSMQGLCKFGFY. Topologically, residues 141–160 are mitochondrial intermembrane; it reads EVFKVLYSNMLGEENTYLWR. A helical membrane pass occupies residues 161–182; sequence TSLYLAASASAEFFADIALAPM. The Mitochondrial matrix segment spans residues 183 to 217; that stretch reads EAAKVRIQTQPGYANTLRDAAPKMYKEEGLKAFYK. The residue at position 195 (Tyr195) is a Phosphotyrosine. The residue at position 208 (Lys208) is an N6-acetyllysine. Residues 218 to 237 traverse the membrane as a helical segment; sequence GVAPLWMRQIPYTMMKFACF. Topologically, residues 238–260 are mitochondrial intermembrane; the sequence is ERTVEALYKFVVPKPRSECSKPE. A helical membrane pass occupies residues 261 to 283; it reads QLVVTFVAGYIAGVFCAIVSHPA. Residues 284-313 lie on the Mitochondrial matrix side of the membrane; it reads DSVVSVLNKEKGSSASLVLKRLGFKGVWKG. The helical transmembrane segment at 314–332 threads the bilayer; it reads LFARIIMIGTLTALQWFIY. Topologically, residues 333–361 are mitochondrial intermembrane; the sequence is DSVKVYFRLPRPPPPEMPESLKKKLGLTQ.

Belongs to the mitochondrial carrier (TC 2.A.29) family. As to quaternary structure, interacts with PPIF; the interaction is impaired by CsA.

It is found in the mitochondrion inner membrane. The catalysed reaction is phosphate(in) + H(+)(in) = phosphate(out) + H(+)(out). In terms of biological role, inorganic ion transporter that transports phosphate or copper ions across the mitochondrial inner membrane into the matrix compartment. Mediates proton-coupled symport of phosphate ions necessary for mitochondrial oxidative phosphorylation of ADP to ATP. Transports copper ions probably in the form of anionic copper(I) complexes to maintain mitochondrial matrix copper pool and to supply copper for cytochrome C oxidase complex assembly. May also play a role in regulation of the mitochondrial permeability transition pore (mPTP). This is Solute carrier family 25 member 3 from Pongo abelii (Sumatran orangutan).